The chain runs to 105 residues: TMEM14 protein homolog YJR085C (105 aa).

3 consecutive transmembrane segments (helical) span residues 26-46 (IPSL…GYLL), 53-73 (GLEM…IRGM), and 77-97 (FTKP…YYYY).

The protein belongs to the TMEM14 family.

Its subcellular location is the mitochondrion. The protein localises to the membrane. The polypeptide is TMEM14 protein homolog YJR085C (Saccharomyces cerevisiae (strain ATCC 204508 / S288c) (Baker's yeast)).